A 350-amino-acid polypeptide reads, in one-letter code: Phosphate acyltransferase (350 aa).

The protein belongs to the PlsX family. In terms of assembly, homodimer. Probably interacts with PlsY.

The protein localises to the cytoplasm. It catalyses the reaction a fatty acyl-[ACP] + phosphate = an acyl phosphate + holo-[ACP]. Its pathway is lipid metabolism; phospholipid metabolism. Catalyzes the reversible formation of acyl-phosphate (acyl-PO(4)) from acyl-[acyl-carrier-protein] (acyl-ACP). This enzyme utilizes acyl-ACP as fatty acyl donor, but not acyl-CoA. The protein is Phosphate acyltransferase of Magnetococcus marinus (strain ATCC BAA-1437 / JCM 17883 / MC-1).